A 319-amino-acid polypeptide reads, in one-letter code: Ribonuclease Z (319 aa).

Zn(2+)-binding residues include H62, H64, D66, H67, H139, D209, and H268. D66 functions as the Proton acceptor in the catalytic mechanism.

It belongs to the RNase Z family. Homodimer. It depends on Zn(2+) as a cofactor.

The catalysed reaction is Endonucleolytic cleavage of RNA, removing extra 3' nucleotides from tRNA precursor, generating 3' termini of tRNAs. A 3'-hydroxy group is left at the tRNA terminus and a 5'-phosphoryl group is left at the trailer molecule.. Functionally, zinc phosphodiesterase, which displays some tRNA 3'-processing endonuclease activity. Probably involved in tRNA maturation, by removing a 3'-trailer from precursor tRNA. The protein is Ribonuclease Z of Pseudomonas putida (strain GB-1).